Consider the following 266-residue polypeptide: Putative carbamate hydrolase RutD (266 aa).

Positions 14-115 (PVVVLISGLG…TMLVSVNGWL (102 aa)) constitute an AB hydrolase-1 domain.

Belongs to the AB hydrolase superfamily. Hydrolase RutD family.

It carries out the reaction carbamate + 2 H(+) = NH4(+) + CO2. Its function is as follows. Involved in pyrimidine catabolism. May facilitate the hydrolysis of carbamate, a reaction that can also occur spontaneously. In Shigella flexneri serotype 5b (strain 8401), this protein is Putative carbamate hydrolase RutD.